Here is a 126-residue protein sequence, read N- to C-terminus: Nascent polypeptide-associated complex protein (126 aa).

An NAC-A/B domain is found at 10 to 77; it reads PRMMKQMQKM…AKKVAKEEEK (68 aa).

The protein belongs to the NAC-alpha family. As to quaternary structure, homodimer. Interacts with the ribosome. Binds ribosomal RNA.

Functionally, contacts the emerging nascent chain on the ribosome. This Methanococcus maripaludis (strain C7 / ATCC BAA-1331) protein is Nascent polypeptide-associated complex protein.